The following is a 611-amino-acid chain: DNA mismatch repair protein MutL (611 aa).

Residues 353 to 387 are disordered; the sequence is NRQAAGGNHFATPAPAAAPRPASTASSSWQRQEPV. The segment covering 363 to 380 has biased composition (low complexity); it reads ATPAPAAAPRPASTASSS.

It belongs to the DNA mismatch repair MutL/HexB family.

Its function is as follows. This protein is involved in the repair of mismatches in DNA. It is required for dam-dependent methyl-directed DNA mismatch repair. May act as a 'molecular matchmaker', a protein that promotes the formation of a stable complex between two or more DNA-binding proteins in an ATP-dependent manner without itself being part of a final effector complex. The sequence is that of DNA mismatch repair protein MutL from Erwinia tasmaniensis (strain DSM 17950 / CFBP 7177 / CIP 109463 / NCPPB 4357 / Et1/99).